A 344-amino-acid chain; its full sequence is [LysW]-L-2-aminoadipate 6-phosphate reductase (344 aa).

NADP(+)-binding positions include 12 to 15 (SGYA), 36 to 38 (SRR), and Leu75. Residue Cys148 is part of the active site. NADP(+) contacts are provided by Ser180, Ala184, and Asn312.

The protein belongs to the NAGSA dehydrogenase family. Type 1 subfamily. LysY sub-subfamily. In terms of assembly, homotetramer. Interacts with LysW. May form a ternary complex with LysW and LysZ.

It localises to the cytoplasm. The enzyme catalyses [amino-group carrier protein]-C-terminal-N-(1-carboxy-5-oxopentan-1-yl)-L-glutamine + phosphate + NADP(+) = [amino-group carrier protein]-C-terminal-N-(1-carboxy-5-phosphooxy-5-oxopentan-1-yl)-L-glutamine + NADPH + H(+). It participates in amino-acid biosynthesis; L-lysine biosynthesis via AAA pathway; L-lysine from L-alpha-aminoadipate (Thermus route): step 3/5. Its function is as follows. Catalyzes the NADPH-dependent reduction of [LysW]-aminoadipate 6-phosphate to yield [LysW]-aminoadipate 6-semialdehyde. The sequence is that of [LysW]-L-2-aminoadipate 6-phosphate reductase from Thermus thermophilus (strain ATCC BAA-163 / DSM 7039 / HB27).